The chain runs to 213 residues: Na(+)-translocating NADH-quinone reductase subunit D (213 aa).

Transmembrane regions (helical) follow at residues 21–41, 42–62, 77–97, 101–121, 131–151, and 183–203; these read PLIA…VKTA, ITMG…VSLL, IIIS…FFNI, LSVF…AESL, FLDG…VSII, and FGLM…IWVV.

This sequence belongs to the NqrDE/RnfAE family. As to quaternary structure, composed of six subunits; NqrA, NqrB, NqrC, NqrD, NqrE and NqrF.

Its subcellular location is the cell inner membrane. It carries out the reaction a ubiquinone + n Na(+)(in) + NADH + H(+) = a ubiquinol + n Na(+)(out) + NAD(+). Functionally, NQR complex catalyzes the reduction of ubiquinone-1 to ubiquinol by two successive reactions, coupled with the transport of Na(+) ions from the cytoplasm to the periplasm. NqrA to NqrE are probably involved in the second step, the conversion of ubisemiquinone to ubiquinol. The polypeptide is Na(+)-translocating NADH-quinone reductase subunit D (Chlamydia felis (strain Fe/C-56) (Chlamydophila felis)).